We begin with the raw amino-acid sequence, 216 residues long: FMN-dependent NADH:quinone oxidoreductase 3 (216 aa).

FMN-binding positions include serine 10 and 16–18 (SAS).

This sequence belongs to the azoreductase type 1 family. In terms of assembly, homodimer. It depends on FMN as a cofactor.

It catalyses the reaction 2 a quinone + NADH + H(+) = 2 a 1,4-benzosemiquinone + NAD(+). The enzyme catalyses N,N-dimethyl-1,4-phenylenediamine + anthranilate + 2 NAD(+) = 2-(4-dimethylaminophenyl)diazenylbenzoate + 2 NADH + 2 H(+). Its function is as follows. Quinone reductase that provides resistance to thiol-specific stress caused by electrophilic quinones. Also exhibits azoreductase activity. Catalyzes the reductive cleavage of the azo bond in aromatic azo compounds to the corresponding amines. The polypeptide is FMN-dependent NADH:quinone oxidoreductase 3 (Pseudomonas fluorescens (strain ATCC BAA-477 / NRRL B-23932 / Pf-5)).